A 347-amino-acid polypeptide reads, in one-letter code: Protein NDL3 (347 aa).

Belongs to the NDRG family. As to quaternary structure, interacts with the heterodimers formed by GB1 and GG1, or GB1 and GG2. Interacts with RGS1.

The protein resides in the cytoplasm. In terms of biological role, involved in a signaling pathway that modulates root auxin transport and auxin gradients. Acts partially by positively regulating the auxin carrier PIN2 and AUX1. Acts, together with GB1 as positive regulator of meristem initiation and branching. GB1 and NDL3 positively regulate basipetal inflorescence auxin transport and modulate MAX2 expression in shoots, which regulates organ and lateral meristem formation by the establishment and maintenance of auxin gradients. This chain is Protein NDL3, found in Arabidopsis thaliana (Mouse-ear cress).